The following is a 422-amino-acid chain: Keratin, type I cytoskeletal 23 (422 aa).

Residues 1-24 (MNSSHSFNQTYSASVHSLGSTRGR) are compositionally biased toward polar residues. The segment at 1–35 (MNSSHSFNQTYSASVHSLGSTRGRQGSCHRAPSVH) is disordered. Residues 1–71 (MNSSHSFNQT…GRSSPLLGGN (71 aa)) are head. Positions 72-107 (GKATMQNLNDRLATYLEKVRALEEANSKLETRILRW) are coil 1A. In terms of domain architecture, IF rod spans 72-382 (GKATMQNLND…RLLEGDTEGT (311 aa)). Residues 108–125 (HQEREPSHRKDYSQYEEN) form a linker 1 region. The interval 126 to 217 (ISRLQEQIVD…KRHEQEMEEN (92 aa)) is coil 1B. A linker 12 region spans residues 218-240 (HLPSDFKVSVKVDTTPGEDLIKV). Residues 241–378 (LEDMRQEYEL…ATYRRLLEGD (138 aa)) form a coil 2 region. The tract at residues 379–422 (TEGTMDGSESRLKGSEASTIKAITQESVNGRIVLSQVNEIQKHI) is rod-like helical tail.

It belongs to the intermediate filament family. Heterotetramer of two type I and two type II keratins.

In Mus musculus (Mouse), this protein is Keratin, type I cytoskeletal 23 (Krt23).